The primary structure comprises 160 residues: Cytochrome b6-f complex subunit 4 (160 aa).

3 consecutive transmembrane segments (helical) span residues 36–56, 95–115, and 128–148; these read LLYI…GLAV, LLGI…PFIE, and IAMS…IGAC.

Belongs to the cytochrome b family. PetD subfamily. The 4 large subunits of the cytochrome b6-f complex are cytochrome b6, subunit IV (17 kDa polypeptide, PetD), cytochrome f and the Rieske protein, while the 4 small subunits are PetG, PetL, PetM and PetN. The complex functions as a dimer.

The protein localises to the cellular thylakoid membrane. Functionally, component of the cytochrome b6-f complex, which mediates electron transfer between photosystem II (PSII) and photosystem I (PSI), cyclic electron flow around PSI, and state transitions. The protein is Cytochrome b6-f complex subunit 4 of Prochlorococcus marinus (strain MIT 9301).